The following is a 135-amino-acid chain: ATP synthase epsilon chain (135 aa).

It belongs to the ATPase epsilon chain family. As to quaternary structure, F-type ATPases have 2 components, CF(1) - the catalytic core - and CF(0) - the membrane proton channel. CF(1) has five subunits: alpha(3), beta(3), gamma(1), delta(1), epsilon(1). CF(0) has three main subunits: a, b and c.

Its subcellular location is the cellular thylakoid membrane. Produces ATP from ADP in the presence of a proton gradient across the membrane. This chain is ATP synthase epsilon chain, found in Prochlorococcus marinus (strain MIT 9211).